We begin with the raw amino-acid sequence, 103 residues long: Histone H4 (103 aa).

The segment covering 1 to 14 (MSGRGKGGKGLGKG) has biased composition (gly residues). The disordered stretch occupies residues 1–20 (MSGRGKGGKGLGKGGAKRHR). Position 2 is an N-acetylserine (Ser-2). Residue Lys-17 is modified to N6-acetyllysine. The DNA-binding element occupies 17–21 (KRHRK). Position 21 is an N6-methyllysine (Lys-21).

Belongs to the histone H4 family. In terms of assembly, the nucleosome is a histone octamer containing two molecules each of H2A, H2B, H3 and H4 assembled in one H3-H4 heterotetramer and two H2A-H2B heterodimers. The octamer wraps approximately 147 bp of DNA.

It localises to the nucleus. Its subcellular location is the chromosome. In terms of biological role, core component of nucleosome. Nucleosomes wrap and compact DNA into chromatin, limiting DNA accessibility to the cellular machineries which require DNA as a template. Histones thereby play a central role in transcription regulation, DNA repair, DNA replication and chromosomal stability. DNA accessibility is regulated via a complex set of post-translational modifications of histones, also called histone code, and nucleosome remodeling. This Capsicum annuum (Capsicum pepper) protein is Histone H4.